Here is a 462-residue protein sequence, read N- to C-terminus: 3-isopropylmalate dehydratase large subunit (462 aa).

Residues Cys337, Cys397, and Cys400 each coordinate [4Fe-4S] cluster.

Belongs to the aconitase/IPM isomerase family. LeuC type 1 subfamily. As to quaternary structure, heterodimer of LeuC and LeuD. The cofactor is [4Fe-4S] cluster.

It carries out the reaction (2R,3S)-3-isopropylmalate = (2S)-2-isopropylmalate. The protein operates within amino-acid biosynthesis; L-leucine biosynthesis; L-leucine from 3-methyl-2-oxobutanoate: step 2/4. Functionally, catalyzes the isomerization between 2-isopropylmalate and 3-isopropylmalate, via the formation of 2-isopropylmaleate. This is 3-isopropylmalate dehydratase large subunit from Listeria monocytogenes serotype 4b (strain CLIP80459).